The sequence spans 269 residues: Tryptophan synthase alpha chain (269 aa).

Active-site proton acceptor residues include Glu49 and Asp60.

It belongs to the TrpA family. As to quaternary structure, tetramer of two alpha and two beta chains.

It carries out the reaction (1S,2R)-1-C-(indol-3-yl)glycerol 3-phosphate + L-serine = D-glyceraldehyde 3-phosphate + L-tryptophan + H2O. It participates in amino-acid biosynthesis; L-tryptophan biosynthesis; L-tryptophan from chorismate: step 5/5. The alpha subunit is responsible for the aldol cleavage of indoleglycerol phosphate to indole and glyceraldehyde 3-phosphate. In Enterobacter sp. (strain 638), this protein is Tryptophan synthase alpha chain.